A 170-amino-acid polypeptide reads, in one-letter code: CCHC-type zinc finger nucleic acid binding protein (170 aa).

N-acetylserine is present on Ser2. The segment at 4 to 21 adopts a CCHC-type 1 zinc-finger fold; that stretch reads NECFKCGRSGHWARECPT. Lys8 carries the post-translational modification N6-acetyllysine. An omega-N-methylarginine; by PRMT1 mark is found at Arg25 and Arg27. The interval 25–33 is RNA-binding Arg/Gly-rich region (RGG-box); that stretch reads RGRGMRSRG. Ser42 is subject to Phosphoserine. 6 CCHC-type zinc fingers span residues 45-62, 65-82, 89-106, 110-127, 128-145, and 149-166; these read DICY…DCDL, DACY…DCKE, QCCY…DCDH, QKCY…DCTK, VKCY…NCSK, and VNCY…ECTI. Residue Arg72 is modified to Omega-N-methylarginine.

In terms of assembly, associates with the 40S ribosomal subunit, the 80S ribosome and with polysomes. In terms of processing, arginine methylation by PRMT1 in the Arg/Gly-rich region impedes RNA binding.

The protein resides in the nucleus. It localises to the cytoplasm. It is found in the endoplasmic reticulum. Its function is as follows. Single-stranded DNA-binding protein that preferentially binds to the sterol regulatory element (SRE) sequence 5'-GTGCGGTG-3', and thereby mediates transcriptional repression. Has a role as transactivator of the Myc promoter. Binds single-stranded RNA in a sequence-specific manner. Binds G-rich elements in target mRNA coding sequences. Prevents G-quadruplex structure formation in vitro, suggesting a role in supporting translation by resolving stable structures on mRNAs. In Bos taurus (Bovine), this protein is CCHC-type zinc finger nucleic acid binding protein (CNBP).